The sequence spans 490 residues: Cytochrome P450 2C39 (490 aa).

The first 25 residues, 1-25, serve as a signal peptide directing secretion; it reads MDLVTFLVLTLSSLILLSLWRQSCG. Residue cysteine 435 coordinates heme.

This sequence belongs to the cytochrome P450 family. Heme is required as a cofactor. Liver.

It localises to the endoplasmic reticulum membrane. The protein resides in the microsome membrane. The enzyme catalyses an organic molecule + reduced [NADPH--hemoprotein reductase] + O2 = an alcohol + oxidized [NADPH--hemoprotein reductase] + H2O + H(+). The catalysed reaction is (5Z,8Z,11Z,14Z)-eicosatetraenoate + reduced [NADPH--hemoprotein reductase] + O2 = 11,12-epoxy-(5Z,8Z,14Z)-eicosatrienoate + oxidized [NADPH--hemoprotein reductase] + H2O + H(+). It carries out the reaction (5Z,8Z,11Z,14Z)-eicosatetraenoate + reduced [NADPH--hemoprotein reductase] + O2 = 14,15-epoxy-(5Z,8Z,11Z)-eicosatrienoate + oxidized [NADPH--hemoprotein reductase] + H2O + H(+). It functions in the pathway lipid metabolism; arachidonate metabolism. In terms of biological role, a cytochrome P450 monooxygenase that primarily catalyzes the epoxidation of 11,12 and 14,15 double bonds of (5Z,8Z,11Z,14Z)-eicosatetraenoic acid (arachidonate) forming 11,12- and 14,15-epoxyeicosatrienoic acids (11,12- and 14,15-EET) regioisomers. Mechanistically, uses molecular oxygen inserting one oxygen atom into a substrate, and reducing the second into a water molecule, with two electrons provided by NADPH via cytochrome P450 reductase (CPR; NADPH--hemoprotein reductase). This is Cytochrome P450 2C39 from Mus musculus (Mouse).